The primary structure comprises 171 residues: Large ribosomal subunit protein bL9 (171 aa).

Belongs to the bacterial ribosomal protein bL9 family.

Binds to the 23S rRNA. This Rickettsia felis (strain ATCC VR-1525 / URRWXCal2) (Rickettsia azadi) protein is Large ribosomal subunit protein bL9.